A 259-amino-acid polypeptide reads, in one-letter code: uncharacterized protein (259 aa).

Positions 1-19 (MKLSVKIAGVLTVAAAAMT) form a signal peptide, or 26. An ATP-binding site is contributed by 214 to 221 (GPYELGKT).

This is an uncharacterized protein from Bacillus subtilis (strain 168).